We begin with the raw amino-acid sequence, 492 residues long: 2,3-bisphosphoglycerate-independent phosphoglycerate mutase (492 aa).

Positions 11 and 61 each coordinate Mn(2+). Serine 61 serves as the catalytic Phosphoserine intermediate. Residues histidine 118, 147-148, arginine 177, arginine 183, 248-251, and lysine 321 contribute to the substrate site; these read RD and RNDR. Residues aspartate 387, histidine 391, aspartate 428, histidine 429, and histidine 446 each coordinate Mn(2+).

Belongs to the BPG-independent phosphoglycerate mutase family. Monomer. Mn(2+) is required as a cofactor.

It carries out the reaction (2R)-2-phosphoglycerate = (2R)-3-phosphoglycerate. The protein operates within carbohydrate degradation; glycolysis; pyruvate from D-glyceraldehyde 3-phosphate: step 3/5. Catalyzes the interconversion of 2-phosphoglycerate and 3-phosphoglycerate. This Helicobacter acinonychis (strain Sheeba) protein is 2,3-bisphosphoglycerate-independent phosphoglycerate mutase.